The chain runs to 306 residues: MHSAHMSNADYIAKKYLRKDQGKKKKKKEKDFVEIQDEDVAGWDDDNSFSLVNRELTSLHDAPTIVANESLKDRDIDAIYQNIEKTTNKPAQLWKAVGNDEVVESEQQDSHDAESIPQFGLLTGKQVTFKAEERRKREEKSSNLDEEELRKSRETVYRDATGRRIDLVLARKEAKRKLKEKEEEARRQKEQQQGVVQVRQQKEYLKELERQKTVPLARYEDDPEYNKELKERSRWNDPAASFLTNKPVSSKATYQGYAPPNRFNIRPGHRWDGIIRGNGFENKWFQRQNERKAQEHEAHMWAIEDM.

The disordered stretch occupies residues 130 to 152 (KAEERRKREEKSSNLDEEELRKS). Residues 130–198 (KAEERRKREE…KEQQQGVVQV (69 aa)) are a coiled coil.

Belongs to the CWC26 family. Belongs to the 40S cdc5-associated complex (or cwf complex), a spliceosome sub-complex reminiscent of a late-stage spliceosome composed of the U2, U5 and U6 snRNAs and at least brr2, cdc5, cwf2/prp3, cwf3/syf1, cwf4/syf3, cwf5/ecm2, spp42/cwf6, cwf7/spf27, cwf8, cwf9, cwf10, cwf11, cwf12, prp45/cwf13, cwf14, cwf15, cwf16, cwf17, cwf18, cwf19, cwf20, cwf21, cwf22, cwf23, cwf24, cwf25, cwf26, cyp7/cwf27, cwf28, cwf29/ist3, lea1, msl1, prp5/cwf1, prp10, prp12/sap130, prp17, prp22, sap61, sap62, sap114, sap145, slu7, smb1, smd1, smd3, smf1, smg1 and syf2.

Its subcellular location is the cytoplasm. It localises to the nucleus. Functionally, involved in mRNA splicing. This is Pre-mRNA-splicing factor cwf26 (cwf26) from Schizosaccharomyces pombe (strain 972 / ATCC 24843) (Fission yeast).